Consider the following 211-residue polypeptide: Ethylene-responsive transcription factor LEP (211 aa).

2 disordered regions span residues 1–21 (MNTT…TRFL) and 74–110 (NFVY…NDPV). Positions 19 to 76 (RFLGVRRRPWGRYAAEIRDPTTKERHWLGTFDTAEEAALAYDRAARSMRGTRARTNFV) form a DNA-binding region, AP2/ERF. The segment covering 81–92 (PPSSSVTSIVSP) has biased composition (low complexity). Positions 93-107 (DDPPPPPPPPAPPSN) are enriched in pro residues.

This sequence belongs to the AP2/ERF transcription factor family. ERF subfamily. Expressed in germinating seeds. Present in young shoots, at low levels, especially in leaf primordia and developing leaf blades. Also detected in vascular tissue, mostly in xylem, of young leaves, petioles and hypocotyls.

The protein resides in the nucleus. Its function is as follows. Cell division-promoting factor involved in leaf blade differentiation, inflorescence branching, as well as in carpel and silique shape. Promotes the number of xylem cells. Positively regulates the gibberellin signaling pathway leading to germination, hypocotyl elongation, and leaf expansion. Probably acts as a transcriptional activator. Binds to the GCC-box pathogenesis-related promoter element. May be involved in the regulation of gene expression by stress factors and by components of stress signal transduction pathways. The chain is Ethylene-responsive transcription factor LEP (LEP) from Arabidopsis thaliana (Mouse-ear cress).